Here is a 428-residue protein sequence, read N- to C-terminus: UPF0229 protein YeaH (428 aa).

Over residues glycine 78–arginine 90 the composition is skewed to basic and acidic residues. The disordered stretch occupies residues glycine 78–glutamate 111. Over residues glutamine 92–glutamine 103 the composition is skewed to gly residues.

Belongs to the UPF0229 family.

This Salmonella paratyphi C (strain RKS4594) protein is UPF0229 protein YeaH.